A 157-amino-acid chain; its full sequence is MFEWNKYFPFHNQFSKEALKKADPKEVETYVNRVMESVFGSDYAAQFPFRDPLPQKEHPAKPDAKPDVKPDIDIFETADHVFVKVPISEEWLEQVRIKHTSHELWLENLPRADHPKKVNLPCLVKRKGTKAVYKDGLLEVMFQKQQDYNMSEVEIIR.

Its subcellular location is the spore coat. Involved in spore germination; probably required at the earliest stage of germination. The protein is Spore germination protein GerT (gerT) of Bacillus subtilis (strain 168).